The primary structure comprises 147 residues: Large ribosomal subunit protein uL13 (147 aa).

It belongs to the universal ribosomal protein uL13 family. Part of the 50S ribosomal subunit.

Functionally, this protein is one of the early assembly proteins of the 50S ribosomal subunit, although it is not seen to bind rRNA by itself. It is important during the early stages of 50S assembly. The chain is Large ribosomal subunit protein uL13 from Rhodococcus jostii (strain RHA1).